We begin with the raw amino-acid sequence, 863 residues long: DNA gyrase subunit A (863 aa).

One can recognise a Topo IIA-type catalytic domain in the interval 37-500 (LPDARDGLKP…DYDDIDIEDL (464 aa)). Residue Y125 is the O-(5'-phospho-DNA)-tyrosine intermediate of the active site. A GyrA-box motif is present at residues 527 to 533 (QKRGGKG).

This sequence belongs to the type II topoisomerase GyrA/ParC subunit family. Heterotetramer, composed of two GyrA and two GyrB chains. In the heterotetramer, GyrA contains the active site tyrosine that forms a transient covalent intermediate with DNA, while GyrB binds cofactors and catalyzes ATP hydrolysis.

It localises to the cytoplasm. The catalysed reaction is ATP-dependent breakage, passage and rejoining of double-stranded DNA.. Its function is as follows. A type II topoisomerase that negatively supercoils closed circular double-stranded (ds) DNA in an ATP-dependent manner to modulate DNA topology and maintain chromosomes in an underwound state. Negative supercoiling favors strand separation, and DNA replication, transcription, recombination and repair, all of which involve strand separation. Also able to catalyze the interconversion of other topological isomers of dsDNA rings, including catenanes and knotted rings. Type II topoisomerases break and join 2 DNA strands simultaneously in an ATP-dependent manner. This Campylobacter jejuni subsp. jejuni serotype O:2 (strain ATCC 700819 / NCTC 11168) protein is DNA gyrase subunit A.